A 405-amino-acid chain; its full sequence is Serpin H1 (405 aa).

The signal sequence occupies residues 1-15 (MQIFLVLALCGLAAA). 2 N-linked (GlcNAc...) asparagine glycosylation sites follow: Asn107 and Asn112. Positions 402–405 (RDEL) match the Prevents secretion from ER motif.

The protein belongs to the serpin family.

It localises to the endoplasmic reticulum lumen. Its function is as follows. Binds specifically to collagen. Could be involved as a chaperone in the biosynthetic pathway of collagen. The sequence is that of Serpin H1 (SERPINH1) from Gallus gallus (Chicken).